We begin with the raw amino-acid sequence, 141 residues long: Large ribosomal subunit protein uL16 (141 aa).

The disordered stretch occupies residues 1–20; that stretch reads MLMPKRTKYRKQQKGRNRGK.

Belongs to the universal ribosomal protein uL16 family. As to quaternary structure, part of the 50S ribosomal subunit.

Its function is as follows. Binds 23S rRNA and is also seen to make contacts with the A and possibly P site tRNAs. This chain is Large ribosomal subunit protein uL16, found in Nautilia profundicola (strain ATCC BAA-1463 / DSM 18972 / AmH).